Here is a 1488-residue protein sequence, read N- to C-terminus: Chromosome partition protein MukB (1488 aa).

34–41 (GGNGAGKS) serves as a coordination point for ATP. Coiled coils occupy residues 326–418 (LEAD…QYNQ), 444–472 (LDTF…QTAH), and 509–602 (RHLA…QRAP). The tract at residues 666 to 783 (PGGAEDQRLN…SLPIFGRAAR (118 aa)) is flexible hinge. Coiled coils occupy residues 835–923 (EAEI…AKLE), 977–1116 (EMLS…AKAG), and 1209–1265 (VEAI…LQSV). The segment at 1049 to 1074 (ADSGAEERARQRRDELHAQLSNNRSR) is disordered. Residues 1051–1065 (SGAEERARQRRDELH) show a composition bias toward basic and acidic residues.

Belongs to the SMC family. MukB subfamily. In terms of assembly, homodimerization via its hinge domain. Binds to DNA via its C-terminal region. Interacts, and probably forms a ternary complex, with MukE and MukF via its C-terminal region. The complex formation is stimulated by calcium or magnesium. Interacts with tubulin-related protein FtsZ.

It is found in the cytoplasm. It localises to the nucleoid. In terms of biological role, plays a central role in chromosome condensation, segregation and cell cycle progression. Functions as a homodimer, which is essential for chromosome partition. Involved in negative DNA supercoiling in vivo, and by this means organize and compact chromosomes. May achieve or facilitate chromosome segregation by condensation DNA from both sides of a centrally located replisome during cell division. This is Chromosome partition protein MukB from Salmonella enteritidis PT4 (strain P125109).